The primary structure comprises 539 residues: Phosphoenolpyruvate carboxykinase (ATP) (539 aa).

Substrate is bound by residues arginine 61, tyrosine 195, and lysine 201. Residues lysine 201, histidine 220, and 238–246 (GLSGTGKTT) contribute to the ATP site. Mn(2+) contacts are provided by lysine 201 and histidine 220. Residue aspartate 259 participates in Mn(2+) binding. Positions 287, 325, and 450 each coordinate ATP. A substrate-binding site is contributed by arginine 325.

The protein belongs to the phosphoenolpyruvate carboxykinase (ATP) family. Mn(2+) is required as a cofactor.

The protein localises to the cytoplasm. It catalyses the reaction oxaloacetate + ATP = phosphoenolpyruvate + ADP + CO2. The protein operates within carbohydrate biosynthesis; gluconeogenesis. Its function is as follows. Involved in the gluconeogenesis. Catalyzes the conversion of oxaloacetate (OAA) to phosphoenolpyruvate (PEP) through direct phosphoryl transfer between the nucleoside triphosphate and OAA. The polypeptide is Phosphoenolpyruvate carboxykinase (ATP) (Methylorubrum populi (strain ATCC BAA-705 / NCIMB 13946 / BJ001) (Methylobacterium populi)).